We begin with the raw amino-acid sequence, 243 residues long: Myelin protein P0 (243 aa).

The signal sequence occupies residues 1-26 (MESSGLRAPCSLLVLLSALVLPPTLA). Residues 27–141 (IEVYTDREVY…VGKSSYVHLQ (115 aa)) form the Ig-like V-type domain. Residues 27–154 (IEVYTDREVY…KGAARAGLVL (128 aa)) lie on the Extracellular side of the membrane. The cysteines at positions 47 and 123 are disulfide-linked. An N-linked (GlcNAc...) asparagine glycan is attached at Asn118. A helical transmembrane segment spans residues 155 to 175 (GIIIAVALALVIVVTILILLI). The Cytoplasmic segment spans residues 176–243 (RYCWLRRQVR…GIGDSRKDRK (68 aa)). The disordered stretch occupies residues 201–243 (AKDSSKRSSRQTPILYAMLDQTRGKASEKKGKGGIGDSRKDRK). A compositionally biased stretch (basic and acidic residues) spans 222-243 (TRGKASEKKGKGGIGDSRKDRK).

The protein belongs to the myelin P0 protein family.

It is found in the cell membrane. In terms of biological role, creation of an extracellular membrane face which guides the wrapping process and ultimately compacts adjacent lamellae. In Xenopus tropicalis (Western clawed frog), this protein is Myelin protein P0 (mpz).